The following is a 65-amino-acid chain: uncharacterized protein (65 aa).

The disordered stretch occupies residues 24 to 65 (NNNNNNNNNNNNNNNNNNNNNNNNNNNNNNNKNNKNNNKNND).

This is an uncharacterized protein from Dictyostelium discoideum (Social amoeba).